The primary structure comprises 205 residues: Imidazole glycerol phosphate synthase subunit HisH (205 aa).

The Glutamine amidotransferase type-1 domain maps to 1 to 205; sequence MVGIVNYNIG…RILKNFCEIG (205 aa). C79 (nucleophile) is an active-site residue. Residues H186 and E188 contribute to the active site.

In terms of assembly, heterodimer of HisH and HisF.

It localises to the cytoplasm. The enzyme catalyses 5-[(5-phospho-1-deoxy-D-ribulos-1-ylimino)methylamino]-1-(5-phospho-beta-D-ribosyl)imidazole-4-carboxamide + L-glutamine = D-erythro-1-(imidazol-4-yl)glycerol 3-phosphate + 5-amino-1-(5-phospho-beta-D-ribosyl)imidazole-4-carboxamide + L-glutamate + H(+). It carries out the reaction L-glutamine + H2O = L-glutamate + NH4(+). It participates in amino-acid biosynthesis; L-histidine biosynthesis; L-histidine from 5-phospho-alpha-D-ribose 1-diphosphate: step 5/9. IGPS catalyzes the conversion of PRFAR and glutamine to IGP, AICAR and glutamate. The HisH subunit catalyzes the hydrolysis of glutamine to glutamate and ammonia as part of the synthesis of IGP and AICAR. The resulting ammonia molecule is channeled to the active site of HisF. The protein is Imidazole glycerol phosphate synthase subunit HisH of Wolinella succinogenes (strain ATCC 29543 / DSM 1740 / CCUG 13145 / JCM 31913 / LMG 7466 / NCTC 11488 / FDC 602W) (Vibrio succinogenes).